The following is a 261-amino-acid chain: 5'-nucleotidase SurE (261 aa).

Positions 8, 9, 43, and 96 each coordinate a divalent metal cation.

It belongs to the SurE nucleotidase family. The cofactor is a divalent metal cation.

Its subcellular location is the cytoplasm. It catalyses the reaction a ribonucleoside 5'-phosphate + H2O = a ribonucleoside + phosphate. Its function is as follows. Nucleotidase that shows phosphatase activity on nucleoside 5'-monophosphates. This is 5'-nucleotidase SurE from Cereibacter sphaeroides (strain KD131 / KCTC 12085) (Rhodobacter sphaeroides).